A 142-amino-acid chain; its full sequence is Large ribosomal subunit protein uL11 (142 aa).

The protein belongs to the universal ribosomal protein uL11 family. Part of the ribosomal stalk of the 50S ribosomal subunit. Interacts with L10 and the large rRNA to form the base of the stalk. L10 forms an elongated spine to which L12 dimers bind in a sequential fashion forming a multimeric L10(L12)X complex. In terms of processing, one or more lysine residues are methylated.

Functionally, forms part of the ribosomal stalk which helps the ribosome interact with GTP-bound translation factors. The protein is Large ribosomal subunit protein uL11 of Brucella abortus (strain S19).